Here is a 21-residue protein sequence, read N- to C-terminus: Paulistine (21 aa).

Cysteines 7 and 14 form a disulfide. A Threonine amide modification is found at threonine 21.

It belongs to the sylv/frat/paul family. Post-translationally, occurs in oxidized and reduced states which are thought to adopt a compact globular and linear structure, respectively.

In terms of biological role, induces transient hyperalgesia and paw edema in mice. Probably exerts its effects via different pathways in an oxidation state-dependent way. This chain is Paulistine, found in Polybia paulista (Neotropical social wasp).